A 116-amino-acid polypeptide reads, in one-letter code: PTS system N,N'-diacetylchitobiose-specific EIIA component (116 aa).

In terms of domain architecture, PTS EIIA type-3 spans 15–113; it reads EELEEVVMGL…ITELIELHEK (99 aa). H89 acts as the Tele-phosphohistidine intermediate in catalysis. H89 is subject to Phosphohistidine; by HPr.

Forms a complex with ChbB (EIIB). ChbA is a homotrimer. Mg(2+) is required as a cofactor.

The protein localises to the cytoplasm. In terms of biological role, the phosphoenolpyruvate-dependent sugar phosphotransferase system (sugar PTS), a major carbohydrate active transport system, catalyzes the phosphorylation of incoming sugar substrates concomitantly with their translocation across the cell membrane. The enzyme II ChbABC PTS system is involved in the transport of the chitin disaccharide N,N'-diacetylchitobiose (GlcNAc2). The sequence is that of PTS system N,N'-diacetylchitobiose-specific EIIA component (chbA) from Escherichia coli O157:H7.